The chain runs to 122 residues: Thioredoxin H-type (122 aa).

The Thioredoxin domain occupies 2–118; sequence AAEEGVVIAC…IVKHVGATAA (117 aa). The cysteines at positions 40 and 43 are disulfide-linked.

The protein resides in the cytoplasm. Functionally, participates in various redox reactions through the reversible oxidation of the active center dithiol to a disulfide. The H form is known to activate a number of cytosolic enzymes. The polypeptide is Thioredoxin H-type (TRXH) (Oryza sativa subsp. indica (Rice)).